We begin with the raw amino-acid sequence, 132 residues long: Small ribosomal subunit protein uS8c (132 aa).

The protein belongs to the universal ribosomal protein uS8 family. In terms of assembly, part of the 30S ribosomal subunit.

The protein resides in the plastid. It is found in the chloroplast. Functionally, one of the primary rRNA binding proteins, it binds directly to 16S rRNA central domain where it helps coordinate assembly of the platform of the 30S subunit. This Nandina domestica (Heavenly bamboo) protein is Small ribosomal subunit protein uS8c (rps8).